A 191-amino-acid polypeptide reads, in one-letter code: Calcium and integrin-binding protein 1 (191 aa).

Glycine 2 carries N-myristoyl glycine lipidation. EF-hand domains are found at residues 103–138 and 148–183; these read TPDI…LTGE and EMKQ…SPDF. 10 residues coordinate Ca(2+): aspartate 116, aspartate 118, aspartate 120, threonine 122, aspartate 127, aspartate 161, aspartate 163, aspartate 165, threonine 167, and glutamate 172.

Monomer. Interacts with the heterodimeric integrin alpha-IIb/beta3 (ITGA2B-ITGB3). Interacts with ITGA2B (via cytoplasmic domain); the interaction is direct and calcium-dependent. Interacts with the protein kinases PLK2/SNK and PRKDC (via the region immediately upstream of the kinase domain). Interacts with PLK3; the interaction inhibits PLK3 kinase activity. Interacts with PSEN2. Interacts (via C-terminus) with F8. Interacts with NBR1 (via C-terminus). Interacts with FEZ1 (via C-terminus). Interacts with UBR5 (via C-terminus); the interaction is sensitive to DNA damage, and may target CIB1 for ubiquitin-mediated degradation. Interacts with IFI6; the interaction is direct. Interacts with BCL2. Interacts with ITPR3; the interaction occurs in a calcium dependent manner. Interacts with PTK2/FAK1. Interacts with MAP3K5; the interaction inhibits MAP3K5 activation by phosphorylation, and its subsequent interaction with TRAF2. Interacts (via C-terminal region) with STMN2 (via the N-terminal region); the interaction is direct, occurs in a calcium-dependent manner and attenuates the STMN2-induced neurite outgrowth inhibition. Interacts with SPHK1, the interaction occurs in a calcium-dependent manner. Interacts with ITGA2B (via C-terminal cytoplasmic tail); the interaction occurs upon platelet aggregation and is stabilized/increased in a calcium and magnesium-dependent manner. Interacts with PAK1 (via N-terminal region); the interaction is direct and occurs in a calcium-dependent manner. Interacts with RAC3 (via C-terminal region); the interaction induces their association with the cytoskeleton upon alpha-IIb/beta3 integrin-mediated adhesion. Interacts with ITGA5 and ITGAV. Interacts with MYO1C. Interacts with ITGA2B (via C-terminal cytoplasmic tail region). Interacts (via C-terminal region) with PPP3R1; the interaction increases upon cardiomyocytes hypertrophy. Interacts with CACNA1C; the interaction increases upon cardiomyocytes hypertrophy. Interacts with TAS1R2 (via C-terminus); this interaction is independent of the myristoylation state of CIB1. Interacts and forms a complex with TMC6 and TMC8; the interaction stabilizes each component of the complex. As to expression, expressed in cardiomyocytes and neurons (at protein level). Expressed during early neural development.

It is found in the membrane. The protein localises to the cell membrane. It localises to the sarcolemma. The protein resides in the apical cell membrane. Its subcellular location is the cell projection. It is found in the ruffle membrane. The protein localises to the filopodium tip. It localises to the growth cone. The protein resides in the lamellipodium. Its subcellular location is the cytoplasm. It is found in the cytoskeleton. The protein localises to the microtubule organizing center. It localises to the centrosome. The protein resides in the perinuclear region. Its subcellular location is the nucleus. It is found in the neuron projection. The protein localises to the perikaryon. In terms of biological role, calcium-binding protein that plays a role in the regulation of numerous cellular processes, such as cell differentiation, cell division, cell proliferation, cell migration, thrombosis, angiogenesis, cardiac hypertrophy and apoptosis. Involved in bone marrow megakaryocyte differentiation by negatively regulating thrombopoietin-mediated signaling pathway. Participates in the endomitotic cell cycle of megakaryocyte, a form of mitosis in which both karyokinesis and cytokinesis are interrupted. Plays a role in integrin signaling by negatively regulating alpha-IIb/beta3 activation in thrombin-stimulated megakaryocytes preventing platelet aggregation. Up-regulates PTK2/FAK1 activity, and is also needed for the recruitment of PTK2/FAK1 to focal adhesions; it thus appears to play an important role in focal adhesion formation. Positively regulates cell migration on fibronectin in a CDC42-dependent manner, the effect being negatively regulated by PAK1. Functions as a negative regulator of stress activated MAP kinase (MAPK) signaling pathways. Down-regulates inositol 1,4,5-trisphosphate receptor-dependent calcium signaling. Involved in sphingosine kinase SPHK1 translocation to the plasma membrane in a N-myristoylation-dependent manner preventing TNF-alpha-induced apoptosis. Regulates serine/threonine-protein kinase PLK3 activity for proper completion of cell division progression. Plays a role in microtubule (MT) dynamics during neuronal development; disrupts the MT depolymerization activity of STMN2 attenuating NGF-induced neurite outgrowth and the MT reorganization at the edge of lamellipodia. Promotes cardiomyocyte hypertrophy via activation of the calcineurin/NFAT signaling pathway. Stimulates calcineurin PPP3R1 activity by mediating its anchoring to the sarcolemma. In ischemia-induced (pathological or adaptive) angiogenesis, stimulates endothelial cell proliferation, migration and microvessel formation by activating the PAK1 and ERK1/ERK2 signaling pathway. Also promotes cancer cell survival and proliferation. May regulate cell cycle and differentiation of spermatogenic germ cells, and/or differentiation of supporting Sertoli cells. Forms a complex with TMC6/EVER1 and TMC8/EVER2 in lymphocytes and keratynocytes where CIB1 stabilizes TMC6 and TMC8 levels and reciprocally. The sequence is that of Calcium and integrin-binding protein 1 (Cib1) from Rattus norvegicus (Rat).